A 62-amino-acid chain; its full sequence is Alpha-conotoxin-like Bn1.3 (62 aa).

The signal sequence occupies residues 1 to 18; it reads MGMRMMFTVFLLVVLATA. A propeptide spanning residues 19–48 is cleaved from the precursor; that stretch reads VLPVTLDRASDGRNAAANAKTPRLIAPFIR. 2 cysteine pairs are disulfide-bonded: cysteine 51–cysteine 57 and cysteine 52–cysteine 61. Cysteine 61 is subject to Cysteine amide.

The protein belongs to the conotoxin A superfamily. Expressed by the venom duct.

It localises to the secreted. Functionally, does not show activity on the acetylcholine receptors tested. In Conus bandanus (Banded marble cone), this protein is Alpha-conotoxin-like Bn1.3.